The sequence spans 171 residues: Lipoprotein signal peptidase (171 aa).

A run of 2 helical transmembrane segments spans residues 67-87 (YALL…LWRS) and 88-108 (TSKL…GNAY). Catalysis depends on residues Asp-118 and Asp-136. Residues 127–147 (FSWYVFNLADAAIVAGVALLL) traverse the membrane as a helical segment.

It belongs to the peptidase A8 family.

It is found in the cell inner membrane. It catalyses the reaction Release of signal peptides from bacterial membrane prolipoproteins. Hydrolyzes -Xaa-Yaa-Zaa-|-(S,diacylglyceryl)Cys-, in which Xaa is hydrophobic (preferably Leu), and Yaa (Ala or Ser) and Zaa (Gly or Ala) have small, neutral side chains.. It participates in protein modification; lipoprotein biosynthesis (signal peptide cleavage). This protein specifically catalyzes the removal of signal peptides from prolipoproteins. The chain is Lipoprotein signal peptidase from Methylocella silvestris (strain DSM 15510 / CIP 108128 / LMG 27833 / NCIMB 13906 / BL2).